Reading from the N-terminus, the 221-residue chain is 7-cyano-7-deazaguanine synthase (221 aa).

10–20 (FSGGQDSTTCL) serves as a coordination point for ATP. Cysteine 186, cysteine 195, cysteine 198, and cysteine 201 together coordinate Zn(2+).

Belongs to the QueC family. As to quaternary structure, homodimer. Requires Zn(2+) as cofactor.

It catalyses the reaction 7-carboxy-7-deazaguanine + NH4(+) + ATP = 7-cyano-7-deazaguanine + ADP + phosphate + H2O + H(+). It functions in the pathway purine metabolism; 7-cyano-7-deazaguanine biosynthesis. Functionally, catalyzes the ATP-dependent conversion of 7-carboxy-7-deazaguanine (CDG) to 7-cyano-7-deazaguanine (preQ(0)). The sequence is that of 7-cyano-7-deazaguanine synthase from Anoxybacillus flavithermus (strain DSM 21510 / WK1).